Here is a 40-residue protein sequence, read N- to C-terminus: Metallothionein-1 (40 aa).

It belongs to the metallothionein superfamily. Type 5 family.

In terms of biological role, this protein binds cations of several transition elements. It is thought to be involved in detoxification processes. The protein is Metallothionein-1 (MtnA) of Drosophila ananassae (Fruit fly).